The sequence spans 336 residues: Ferrochelatase (336 aa).

Fe cation is bound by residues His206 and Glu287.

Belongs to the ferrochelatase family.

It localises to the cytoplasm. It carries out the reaction heme b + 2 H(+) = protoporphyrin IX + Fe(2+). It participates in porphyrin-containing compound metabolism; protoheme biosynthesis; protoheme from protoporphyrin-IX: step 1/1. In terms of biological role, catalyzes the ferrous insertion into protoporphyrin IX. This is Ferrochelatase from Neisseria meningitidis serogroup B (strain ATCC BAA-335 / MC58).